The sequence spans 431 residues: Trigger factor (431 aa).

Residues 164–249 (GNIAVIDFKG…IKEIKVKELP (86 aa)) form the PPIase FKBP-type domain.

It belongs to the FKBP-type PPIase family. Tig subfamily.

The protein resides in the cytoplasm. It carries out the reaction [protein]-peptidylproline (omega=180) = [protein]-peptidylproline (omega=0). In terms of biological role, involved in protein export. Acts as a chaperone by maintaining the newly synthesized protein in an open conformation. Functions as a peptidyl-prolyl cis-trans isomerase. The chain is Trigger factor from Clostridium tetani (strain Massachusetts / E88).